Reading from the N-terminus, the 376-residue chain is Putative glutamate--cysteine ligase 2-3 (376 aa).

This sequence belongs to the glutamate--cysteine ligase type 2 family. YbdK subfamily.

The enzyme catalyses L-cysteine + L-glutamate + ATP = gamma-L-glutamyl-L-cysteine + ADP + phosphate + H(+). Its function is as follows. ATP-dependent carboxylate-amine ligase which exhibits weak glutamate--cysteine ligase activity. In Nocardioides sp. (strain ATCC BAA-499 / JS614), this protein is Putative glutamate--cysteine ligase 2-3.